The chain runs to 738 residues: Conserved oligomeric Golgi complex subunit 4 (738 aa).

It belongs to the COG4 family. Component of the conserved oligomeric Golgi complex which is composed of eight different subunits and is required for normal Golgi morphology and localization. Interacts with COG2 and COG3.

It localises to the golgi apparatus membrane. Required for normal Golgi function. In Arabidopsis thaliana (Mouse-ear cress), this protein is Conserved oligomeric Golgi complex subunit 4.